Here is a 263-residue protein sequence, read N- to C-terminus: UDP-N-acetylenolpyruvoylglucosamine reductase (263 aa).

Arg-146 is an active-site residue. The active-site Proton donor is Ser-188. Glu-258 is a catalytic residue.

It belongs to the MurB family. FAD is required as a cofactor.

The protein resides in the cytoplasm. It carries out the reaction UDP-N-acetyl-alpha-D-muramate + NADP(+) = UDP-N-acetyl-3-O-(1-carboxyvinyl)-alpha-D-glucosamine + NADPH + H(+). It functions in the pathway cell wall biogenesis; peptidoglycan biosynthesis. In terms of biological role, cell wall formation. This is UDP-N-acetylenolpyruvoylglucosamine reductase from Helicobacter hepaticus (strain ATCC 51449 / 3B1).